The following is a 427-amino-acid chain: Histidine--tRNA ligase (427 aa).

It belongs to the class-II aminoacyl-tRNA synthetase family. In terms of assembly, homodimer.

The protein localises to the cytoplasm. It catalyses the reaction tRNA(His) + L-histidine + ATP = L-histidyl-tRNA(His) + AMP + diphosphate + H(+). The polypeptide is Histidine--tRNA ligase (Mannheimia succiniciproducens (strain KCTC 0769BP / MBEL55E)).